The chain runs to 965 residues: Forespore membrane adapter protein MUG56 (965 aa).

Residues Ser70–Ser175 are disordered. The segment covering Asp82–Thr101 has biased composition (polar residues). Residues Arg102–Phe114 are compositionally biased toward low complexity. Residues Thr124–Glu158 show a composition bias toward polar residues. A compositionally biased stretch (low complexity) spans Thr159 to Ser175. 2 consecutive PH domains span residues Pro562 to Ser737 and Val800 to Asn961.

Belongs to the SPO71 family.

It is found in the cytoplasm. Its subcellular location is the nucleus. It localises to the prospore membrane. In terms of biological role, may recruit a lipid transfer protein to the forespore membrane during sporulation, thereby aiding forespore membrane formation. Required for meiosis. This Schizosaccharomyces pombe (strain 972 / ATCC 24843) (Fission yeast) protein is Forespore membrane adapter protein MUG56.